Consider the following 433-residue polypeptide: Serine--tRNA ligase (433 aa).

236 to 238 contributes to the L-serine binding site; the sequence is TAE. Residue 267–269 participates in ATP binding; sequence RSE. Glu-290 is an L-serine binding site. 354–357 contacts ATP; that stretch reads EISS. Ser-394 provides a ligand contact to L-serine.

The protein belongs to the class-II aminoacyl-tRNA synthetase family. Type-1 seryl-tRNA synthetase subfamily. Homodimer. The tRNA molecule binds across the dimer.

The protein localises to the cytoplasm. The enzyme catalyses tRNA(Ser) + L-serine + ATP = L-seryl-tRNA(Ser) + AMP + diphosphate + H(+). It catalyses the reaction tRNA(Sec) + L-serine + ATP = L-seryl-tRNA(Sec) + AMP + diphosphate + H(+). The protein operates within aminoacyl-tRNA biosynthesis; selenocysteinyl-tRNA(Sec) biosynthesis; L-seryl-tRNA(Sec) from L-serine and tRNA(Sec): step 1/1. In terms of biological role, catalyzes the attachment of serine to tRNA(Ser). Is also able to aminoacylate tRNA(Sec) with serine, to form the misacylated tRNA L-seryl-tRNA(Sec), which will be further converted into selenocysteinyl-tRNA(Sec). This is Serine--tRNA ligase from Acidiphilium cryptum (strain JF-5).